A 742-amino-acid chain; its full sequence is Collectin-12 (742 aa).

Residues 1–37 (MKDDFAEEEEVHSFGYKRFGIQEGTQCTKCKNNWALK) lie on the Cytoplasmic side of the membrane. The chain crosses the membrane as a helical; Signal-anchor for type II membrane protein span at residues 38 to 58 (LSIILLYILCALLTITVAILG). Over 59-742 (YKVVEKMDNV…DRERELAITL (684 aa)) the chain is Extracellular. N-linked (GlcNAc...) asparagine glycosylation occurs at N67. Positions 73 to 141 (ETSRQTYDDK…NKDTLEKLQA (69 aa)) form a coiled coil. N-linked (GlcNAc...) asparagine glycosylation is found at N159 and N168. The stretch at 215 to 254 (QQRNLITNLQRSVDDTSQAIQRIKNDFQNLQQVFLQAKKD) forms a coiled coil. N271 is a glycosylation site (N-linked (GlcNAc...) asparagine). Positions 296–328 (QMDNITTASQANEQNLKDLQDVHRDAENRTAAK) form a coiled coil. The segment at 439–591 (TILQGPPGPR…PPGPSGAAVP (153 aa)) is disordered. Collagen-like domains are found at residues 443–502 (GPPG…KGSK) and 527–586 (GPPG…PGPS). A compositionally biased stretch (low complexity) spans 501–514 (SKGLQGSKGSRGSP). The segment covering 516–532 (KPGPQGPSGDPGPPGPP) has biased composition (pro residues). The segment covering 534 to 556 (KDGLPGPQGPPGFQGLQGTVGEP) has biased composition (low complexity). 3 cysteine pairs are disulfide-bonded: C607-C618, C635-C730, and C708-C722. Residues 614-731 (FTDKCYYFST…CEDMNHFICE (118 aa)) enclose the C-type lectin domain. Residues F644, N646, E650, D670, and E674 each contribute to the Ca(2+) site. A carbohydrate-binding residues include K691, Q694, and D696. Q694, D696, N697, E706, D707, N718, D719, and E731 together coordinate Ca(2+). E706 is an a carbohydrate binding site. Positions 718 and 719 each coordinate a carbohydrate.

As to quaternary structure, the extracellular domain forms a stable trimer. The extracellular domain interacts with fibrillar amyloid-beta peptide.

The protein localises to the membrane. Functionally, scavenger receptor that displays several functions associated with host defense. Promotes binding and phagocytosis of Gram-positive, Gram-negative bacteria and yeast. Mediates the recognition, internalization and degradation of oxidatively modified low density lipoprotein (oxLDL) by vascular endothelial cells. Binds to several carbohydrates including Gal-type ligands, D-galactose, L- and D-fucose, GalNAc, T and Tn antigens in a calcium-dependent manner and internalizes specifically GalNAc in nurse-like cells. Also binds to sialyl Lewis X or a trisaccharide and asialo-orosomucoid (ASOR). This Bos taurus (Bovine) protein is Collectin-12 (COLEC12).